The sequence spans 156 residues: MSRRKIPIKRSPKPDSIYRSRLVNMMVNRILKNGKKSLASHILYNAMKEIKHKTKKNPSLILRQAVVRATPKITIKARRIGGSNYQVPVEIKPEKGHSLAIRWLLTASRKRTGKNMVFKLANELLDAAKDTGGAIRKKEETHRMAEANRAFAHFRY.

Belongs to the universal ribosomal protein uS7 family. Part of the 30S ribosomal subunit.

It is found in the plastid. The protein resides in the chloroplast. One of the primary rRNA binding proteins, it binds directly to 16S rRNA where it nucleates assembly of the head domain of the 30S subunit. The polypeptide is Small ribosomal subunit protein uS7c (rps7) (Chara vulgaris (Common stonewort)).